The sequence spans 444 residues: MTTTTMAGTPVAPAAAKPWYKVLYVQVLIAIVLGAIVGWLWPTVATNDWIKALGDGFIKLIKMVIAPIIFCTVVSGIAHIQDAKKVGRIGVKALVYFEVVSTFALVIGLIIGNLVRPGAGFGNAAANEAAVATYAKQAAGQKSVDFVLHIIPDTVVGAFAQGEILQVLLFSVLFGFAIMSLGERGHTIRSFIDDAAHAVFGVISIVMRAAPIGAFGAMAYTIGKFGTGAILNLIGLIATFYVTAALFVFVVLGIIARLAGFSIFKFLAYIKDELLIVLGTSSSESALPSLMEKLERLGCSKSVVGLVVPTGYSFNLDGTNIYMTLATLFIAQALGFDLSFGQQLTILVVAMLTSKGASGITGAGFITLAATLAVVDPRLVPGMAIVLGIDKFMSECRALTNLCGNGVACVIVAWWEGELDRDKLNAGLSRQIDPTDMETAITTD.

9 consecutive transmembrane segments (helical) span residues 22–42 (VLYV…WLWP), 60–80 (LIKM…IAHI), 95–115 (VYFE…GNLV), 162–182 (GEIL…MSLG), 198–218 (AVFG…FGAM), 236–256 (LIAT…GIIA), 321–341 (IYMT…LSFG), 346–366 (ILVV…AGFI), and 399–419 (LTNL…EGEL).

It belongs to the dicarboxylate/amino acid:cation symporter (DAACS) (TC 2.A.23) family.

It localises to the cell inner membrane. In terms of biological role, responsible for the transport of dicarboxylates such as succinate, fumarate, and malate from the periplasm across the membrane. The sequence is that of C4-dicarboxylate transport protein 3 from Bradyrhizobium diazoefficiens (strain JCM 10833 / BCRC 13528 / IAM 13628 / NBRC 14792 / USDA 110).